The primary structure comprises 66 residues: Large ribosomal subunit protein bL35 (66 aa).

Belongs to the bacterial ribosomal protein bL35 family.

The chain is Large ribosomal subunit protein bL35 from Caulobacter sp. (strain K31).